Here is a 373-residue protein sequence, read N- to C-terminus: MTIDYYETLSVERDADQGTIKKAYRKLAMKYHPDRNQGDKEAETLFKECTEAYEVLRDESKRRIYDTYGHEGLKNNGQRDTGGAGDIFSHFGDLFGFGGGGGRSQARRNGPIEGNDLRYDVSISFMESIQGVSKEVKLSRRETCWTCEGTGSRPGYQPQTCPTCNGRGQVLRSQGFFQVSTTCPECEGEGQVIKEPCNDCHGEGLVKKTKTVAIKIPAGVDTGARMRLRGEGEGGRRGGPSGDLFVIVHVSSHEFFERDGDTIYCRLPVSMTTAALGDTVDVPTVHGKKNLKIPAGSQSGERFTLRGEGVPSLRGRGNGDMVVELHVETPTGLCEEQKKMLRDFHSFCEEHGQHEKTKGFFAKLFDEVLGKNK.

Positions 4–69 (DYYETLSVER…SKRRIYDTYG (66 aa)) constitute a J domain. The CR-type zinc finger occupies 131-209 (GVSKEVKLSR…CHGEGLVKKT (79 aa)). Zn(2+) is bound by residues C144, C147, C161, C164, C183, C186, C197, and C200. CXXCXGXG motif repeat units lie at residues 144–151 (CWTCEGTG), 161–168 (CPTCNGRG), 183–190 (CPECEGEG), and 197–204 (CNDCHGEG).

Belongs to the DnaJ family. Homodimer. Zn(2+) serves as cofactor.

It localises to the cytoplasm. In terms of biological role, participates actively in the response to hyperosmotic and heat shock by preventing the aggregation of stress-denatured proteins and by disaggregating proteins, also in an autonomous, DnaK-independent fashion. Unfolded proteins bind initially to DnaJ; upon interaction with the DnaJ-bound protein, DnaK hydrolyzes its bound ATP, resulting in the formation of a stable complex. GrpE releases ADP from DnaK; ATP binding to DnaK triggers the release of the substrate protein, thus completing the reaction cycle. Several rounds of ATP-dependent interactions between DnaJ, DnaK and GrpE are required for fully efficient folding. Also involved, together with DnaK and GrpE, in the DNA replication of plasmids through activation of initiation proteins. The chain is Chaperone protein DnaJ from Desulfotalea psychrophila (strain LSv54 / DSM 12343).